The sequence spans 160 residues: Small ribosomal subunit protein uS7 (160 aa).

It belongs to the universal ribosomal protein uS7 family. Part of the 30S ribosomal subunit. Contacts proteins S9 and S11.

Functionally, one of the primary rRNA binding proteins, it binds directly to 16S rRNA where it nucleates assembly of the head domain of the 30S subunit. Is located at the subunit interface close to the decoding center, probably blocks exit of the E-site tRNA. This chain is Small ribosomal subunit protein uS7, found in Rickettsia akari (strain Hartford).